The chain runs to 317 residues: uncharacterized protein (317 aa).

To A.aeolicus AA11 and AA34.

This is an uncharacterized protein from Aquifex aeolicus (strain VF5).